A 123-amino-acid chain; its full sequence is Small ribosomal subunit protein uS12 (123 aa).

The segment covering 10–20 has biased composition (basic residues); it reads KGRKKVKKKKT. Residues 10 to 32 form a disordered region; that stretch reads KGRKKVKKKKTAPALQGSPQKRG. Position 89 is a 3-methylthioaspartic acid (Asp89).

It belongs to the universal ribosomal protein uS12 family. Part of the 30S ribosomal subunit. Contacts proteins S8 and S17. May interact with IF1 in the 30S initiation complex.

Functionally, with S4 and S5 plays an important role in translational accuracy. In terms of biological role, interacts with and stabilizes bases of the 16S rRNA that are involved in tRNA selection in the A site and with the mRNA backbone. Located at the interface of the 30S and 50S subunits, it traverses the body of the 30S subunit contacting proteins on the other side and probably holding the rRNA structure together. The combined cluster of proteins S8, S12 and S17 appears to hold together the shoulder and platform of the 30S subunit. The protein is Small ribosomal subunit protein uS12 of Halothermothrix orenii (strain H 168 / OCM 544 / DSM 9562).